We begin with the raw amino-acid sequence, 256 residues long: Thiazole synthase (256 aa).

Catalysis depends on Lys95, which acts as the Schiff-base intermediate with DXP. 1-deoxy-D-xylulose 5-phosphate-binding positions include Gly156, 182–183 (AG), and 204–205 (NT).

This sequence belongs to the ThiG family. As to quaternary structure, homotetramer. Forms heterodimers with either ThiH or ThiS.

The protein resides in the cytoplasm. It catalyses the reaction [ThiS sulfur-carrier protein]-C-terminal-Gly-aminoethanethioate + 2-iminoacetate + 1-deoxy-D-xylulose 5-phosphate = [ThiS sulfur-carrier protein]-C-terminal Gly-Gly + 2-[(2R,5Z)-2-carboxy-4-methylthiazol-5(2H)-ylidene]ethyl phosphate + 2 H2O + H(+). It functions in the pathway cofactor biosynthesis; thiamine diphosphate biosynthesis. In terms of biological role, catalyzes the rearrangement of 1-deoxy-D-xylulose 5-phosphate (DXP) to produce the thiazole phosphate moiety of thiamine. Sulfur is provided by the thiocarboxylate moiety of the carrier protein ThiS. In vitro, sulfur can be provided by H(2)S. The protein is Thiazole synthase of Salmonella agona (strain SL483).